Consider the following 486-residue polypeptide: MDQEESHVISIFETVGAYFINIFYNFLYKNALYKKHSIVMEYQYQVKGYILGVKQNKKLYEKMLDSFYKYFCNITQINSKTLNFSNFVSTIVDSFLPKEYSQSISLEKKDSILELLLCDYISNLGTFITTEKMLPFIVKNRKENYHKVTKEMQDYSLTFLLKKRMELYNKFLRKQAYVEPETELEETYARLSSYNRSLLYQIEELTSEKKSFLEELSTLRKKYEKRQSEYRRLVQLLYQQIQRSSSSKTSYPLTKFIETLPSEHFSNEEYQKEASADQKVILREQEETELLREQELLASQEVTSKSPNNYPVPQSRTIVNKPSDNYPVPRSRSTKIDFDNSLQKQELHAKNGFSEKAIVEFNQDKQPMFKEEAIVEFNQDKPEIKEETIVEFNQNKQPMFKEEAILEFNQDKQPEFKETILDNKEILDNKEDILEEENQDEPIVQNPFLENFWKPEQKTFNQSGLFEESSDFSNDWSGGDVTLNFS.

Residues 7–28 (HVISIFETVGAYFINIFYNFLY) traverse the membrane as a helical segment. N-linked (GlcNAc...) asparagine; by host glycans are attached at residues N73, N83, and N195. Residues 183-233 (ELEETYARLSSYNRSLLYQIEELTSEKKSFLEELSTLRKKYEKRQSEYRRL) adopt a coiled-coil conformation. A disordered region spans residues 299–329 (SQEVTSKSPNNYPVPQSRTIVNKPSDNYPVP). The span at 300–323 (QEVTSKSPNNYPVPQSRTIVNKPS) shows a compositional bias: polar residues. N461 carries N-linked (GlcNAc...) asparagine; by host glycosylation.

It belongs to the asfivirus B475L family.

The protein resides in the host membrane. This is an uncharacterized protein from Ornithodoros (relapsing fever ticks).